Consider the following 69-residue polypeptide: Conotoxin SIVA (69 aa).

Positions M1–S21 are cleaved as a signal peptide. The propeptide occupies T22 to R38. Q39 carries the pyrrolidone carboxylic acid modification. The O-linked (HexNAc...) serine glycan is linked to S45. Residues P55, P60, and P61 each carry the 4-hydroxyproline modification. Position 68 is a cysteine amide (C68).

It belongs to the conotoxin A superfamily. In terms of processing, contains 3 disulfide bonds. Post-translationally, O-linked glycan consists of Hex3-HexNAc2 pentasaccharide. Expressed by the venom duct.

The protein resides in the secreted. Functionally, neurotoxin with probable activity on sodium channel. Induces intense repetitive firing of the frog neuromuscular junction, leading to a tetanic contracture in muscle fiber (spastic paralysis). In vivo, shows the same effect as the whole venom when injected on fish. Intraperitoneal injection into fish induces a period of rapid swimming followed by a spastic paralysis with stiff fibrillating fins. At high doses, the peptide is lethal to both fish and mice. In Conus striatus (Striated cone), this protein is Conotoxin SIVA.